Consider the following 438-residue polypeptide: Anaerobic glycerol-3-phosphate dehydrogenase subunit B (438 aa).

The protein belongs to the anaerobic G-3-P dehydrogenase subunit B family. Composed of a catalytic GlpA/B dimer and of membrane bound GlpC. Requires FMN as cofactor.

It catalyses the reaction a quinone + sn-glycerol 3-phosphate = dihydroxyacetone phosphate + a quinol. It participates in polyol metabolism; glycerol degradation via glycerol kinase pathway; glycerone phosphate from sn-glycerol 3-phosphate (anaerobic route): step 1/1. Functionally, conversion of glycerol 3-phosphate to dihydroxyacetone. Uses fumarate or nitrate as electron acceptor. This chain is Anaerobic glycerol-3-phosphate dehydrogenase subunit B, found in Vibrio vulnificus (strain CMCP6).